Consider the following 180-residue polypeptide: Large ribosomal subunit protein uL6 (180 aa).

It belongs to the universal ribosomal protein uL6 family. Part of the 50S ribosomal subunit.

Its function is as follows. This protein binds to the 23S rRNA, and is important in its secondary structure. It is located near the subunit interface in the base of the L7/L12 stalk, and near the tRNA binding site of the peptidyltransferase center. This is Large ribosomal subunit protein uL6 from Picrophilus torridus (strain ATCC 700027 / DSM 9790 / JCM 10055 / NBRC 100828 / KAW 2/3).